The chain runs to 307 residues: Pseudouridine-5'-phosphate glycosidase (307 aa).

Glutamate 28 functions as the Proton donor in the catalytic mechanism. The substrate site is built by lysine 89 and valine 109. Residue aspartate 141 participates in Mn(2+) binding. Position 143-145 (143-145) interacts with substrate; sequence SAD. The active-site Nucleophile is the lysine 162.

The protein belongs to the pseudouridine-5'-phosphate glycosidase family. As to quaternary structure, homotrimer. The cofactor is Mn(2+).

The enzyme catalyses D-ribose 5-phosphate + uracil = psi-UMP + H2O. In terms of biological role, catalyzes the reversible cleavage of pseudouridine 5'-phosphate (PsiMP) to ribose 5-phosphate and uracil. Functions biologically in the cleavage direction, as part of a pseudouridine degradation pathway. The protein is Pseudouridine-5'-phosphate glycosidase of Staphylococcus aureus (strain MW2).